The following is a 1252-amino-acid chain: Plasma membrane calcium-transporting ATPase mca-1 (1252 aa).

Over 1 to 121 (MQKSQNVTAV…VRLVLDACKD (121 aa)) the chain is Cytoplasmic. Residues 122–142 (PTLVILVLSGFINLALSFYEP) form a helical membrane-spanning segment. Residues 143 to 180 (TSAAEDATQHLVNATTAAILANGTFMSTTEAPSEGHGT) are Extracellular-facing. Residues Asn-155 and Asn-164 are each glycosylated (N-linked (GlcNAc...) asparagine). A helical membrane pass occupies residues 181 to 201 (AWIEGVAILLCVIVVVLVTAV). Residues 202 to 376 (NDYSKERQFR…KSVLQAKLSK (175 aa)) lie on the Cytoplasmic side of the membrane. Positions 330-361 (DDSTSTSSSSSSSSSSSGSSSNGSSDSSKSGD) are disordered. The segment covering 333–357 (TSTSSSSSSSSSSSGSSSNGSSDSS) has biased composition (low complexity). Residues 377 to 397 (LALQIIYCGTTIAIIALIVLV) traverse the membrane as a helical segment. Residues 398-422 (TRFCLDHYVFEKNEFSLVDIQMFVK) lie on the Extracellular side of the membrane. The chain crosses the membrane as a helical span at residues 423–443 (FFIIAVTILVISIPEGLPLAI). Ca(2+)-binding residues include Val-432, Ile-435, and Glu-437. The Cytoplasmic portion of the chain corresponds to 444 to 879 (ALALTYSVRK…GRNVYDSISK (436 aa)). The 4-aspartylphosphate intermediate role is filled by Asp-479. Mg(2+)-binding residues include Asp-479 and Thr-481. Thr-481, Glu-553, Lys-612, Thr-733, Gly-734, Asp-735, Arg-792, and Lys-798 together coordinate ATP. Asp-822 contacts Mg(2+). Asn-825 is an ATP binding site. Residues 880 to 900 (FLQFQLTVNVVAVITAFVGAV) form a helical membrane-spanning segment. A Ca(2+)-binding site is contributed by Asn-888. Topologically, residues 901–908 (TVSDSPLK) are extracellular. Residues 909 to 929 (AVHMLWINLIMDTLASLALAT) traverse the membrane as a helical segment. Positions 916 and 920 each coordinate Ca(2+). Topologically, residues 930 to 960 (EQPTDELLERKPYGRKKSLISRTMVKNILCH) are cytoplasmic. Residues 961-981 (ALYQLIIIFVIFFYGDTIFGI) traverse the membrane as a helical segment. At 982–989 (KTGLYAPL) the chain is on the extracellular side. Residues 990–1010 (FAPPSQHFTLVFNAFVMMTVF) form a helical membrane-spanning segment. Topologically, residues 1011–1035 (NEINARKVHGERNVFKGLASNRVFC) are cytoplasmic. The chain crosses the membrane as a helical span at residues 1036–1056 (VIWVTTFIAQIIIVQFGGAWF). At 1057 to 1065 (STAPLTLQQ) the chain is on the extracellular side. Residues 1066 to 1086 (WIVCLVLGFSTLIWGQIVATI) traverse the membrane as a helical segment. At 1087–1252 (PSKKLPKAWK…NVDMEDIELN (166 aa)) the chain is on the cytoplasmic side. Residues 1124 to 1142 (LRRSGKSLWVRGMFIIGNH) are calmodulin-binding subdomain A. The tract at residues 1143 to 1152 (LRVLRAFGME) is calmodulin-binding subdomain B. Positions 1181-1252 (YRHQKHQEKK…NVDMEDIELN (72 aa)) are disordered.

This sequence belongs to the cation transport ATPase (P-type) (TC 3.A.3) family. Type IIB subfamily. Interacts with calmodulin.

The protein resides in the cell membrane. It carries out the reaction Ca(2+)(in) + ATP + H2O = Ca(2+)(out) + ADP + phosphate + H(+). Functionally, catalyzes the hydrolysis of ATP coupled with the transport of calcium across a membrane. The sequence is that of Plasma membrane calcium-transporting ATPase mca-1 from Caenorhabditis elegans.